The following is an 880-amino-acid chain: Valine--tRNA ligase (880 aa).

Residues 49 to 59 (PNVTGKLHLGH) carry the 'HIGH' region motif. The short motif at 525 to 529 (KMSKS) is the 'KMSKS' region element. Position 528 (Lys-528) interacts with ATP. The stretch at 809–880 (LEGLINIDEE…VEKRIAELKN (72 aa)) forms a coiled coil.

Belongs to the class-I aminoacyl-tRNA synthetase family. ValS type 1 subfamily. In terms of assembly, monomer.

Its subcellular location is the cytoplasm. The catalysed reaction is tRNA(Val) + L-valine + ATP = L-valyl-tRNA(Val) + AMP + diphosphate. Catalyzes the attachment of valine to tRNA(Val). As ValRS can inadvertently accommodate and process structurally similar amino acids such as threonine, to avoid such errors, it has a 'posttransfer' editing activity that hydrolyzes mischarged Thr-tRNA(Val) in a tRNA-dependent manner. This Bacillus licheniformis (strain ATCC 14580 / DSM 13 / JCM 2505 / CCUG 7422 / NBRC 12200 / NCIMB 9375 / NCTC 10341 / NRRL NRS-1264 / Gibson 46) protein is Valine--tRNA ligase.